The sequence spans 280 residues: Dihydropteroate synthase (280 aa).

The region spanning 1-265 is the Pterin-binding domain; the sequence is MSPAPVQVMG…DVRASVDAIK (265 aa). Asparagine 13 provides a ligand contact to Mg(2+). Residues aspartate 86, asparagine 105, aspartate 177, lysine 213, and 253–255 each bind (7,8-dihydropterin-6-yl)methyl diphosphate; that span reads RVH.

The protein belongs to the DHPS family. As to quaternary structure, homodimer. Mg(2+) serves as cofactor.

It carries out the reaction (7,8-dihydropterin-6-yl)methyl diphosphate + 4-aminobenzoate = 7,8-dihydropteroate + diphosphate. It functions in the pathway cofactor biosynthesis; tetrahydrofolate biosynthesis; 7,8-dihydrofolate from 2-amino-4-hydroxy-6-hydroxymethyl-7,8-dihydropteridine diphosphate and 4-aminobenzoate: step 1/2. Its function is as follows. Catalyzes the condensation of para-aminobenzoate (pABA) with 6-hydroxymethyl-7,8-dihydropterin diphosphate (DHPt-PP) to form 7,8-dihydropteroate (H2Pte), the immediate precursor of folate derivatives. The protein is Dihydropteroate synthase (folP1) of Mycobacterium bovis (strain ATCC BAA-935 / AF2122/97).